The following is a 117-amino-acid chain: Probable non-functional immunoglobulinn kappa variable 1-37 (117 aa).

The signal sequence occupies residues 1–22; that stretch reads MDMRVPAQLLGLLLLWVPGARC. The region spanning 24–117 is the Ig-like domain; the sequence is IQLTQSPSSL…YYGQRTYNAP (94 aa).

In terms of assembly, most probably, the immunoglobulin is not assembled due to incorrect folding of light chain. Immunoglobulins are composed of two identical heavy chains and two identical light chains; disulfide-linked.

The protein resides in the secreted. The protein localises to the cell membrane. Functionally, probable non-functional open reading frame (ORF) of V region of the variable domain of immunoglobulin light chains. Non-functional ORF generally cannot participate in the synthesis of a productive immunoglobulin chain due to altered V-(D)-J or switch recombination and/or splicing site (at mRNA level) and/or conserved amino acid change (protein level). Immunoglobulins, also known as antibodies, are membrane-bound or secreted glycoproteins produced by B lymphocytes. In the recognition phase of humoral immunity, the membrane-bound immunoglobulins serve as receptors which, upon binding of a specific antigen, trigger the clonal expansion and differentiation of B lymphocytes into immunoglobulins-secreting plasma cells. Secreted immunoglobulins mediate the effector phase of humoral immunity, which results in the elimination of bound antigens. The antigen binding site is formed by the variable domain of one heavy chain, together with that of its associated light chain. Thus, each immunoglobulin has two antigen binding sites with remarkable affinity for a particular antigen. The variable domains are assembled by a process called V-(D)-J rearrangement and can then be subjected to somatic hypermutations which, after exposure to antigen and selection, allow affinity maturation for a particular antigen. In Homo sapiens (Human), this protein is Probable non-functional immunoglobulinn kappa variable 1-37.